We begin with the raw amino-acid sequence, 548 residues long: Chaperonin GroEL (548 aa).

Residues 30-33, Lys51, 87-91, Gly415, and Asp495 contribute to the ATP site; these read TLGP and DGTTT.

The protein belongs to the chaperonin (HSP60) family. In terms of assembly, forms a cylinder of 14 subunits composed of two heptameric rings stacked back-to-back. Interacts with the co-chaperonin GroES.

The protein resides in the cytoplasm. The catalysed reaction is ATP + H2O + a folded polypeptide = ADP + phosphate + an unfolded polypeptide.. Its function is as follows. Together with its co-chaperonin GroES, plays an essential role in assisting protein folding. The GroEL-GroES system forms a nano-cage that allows encapsulation of the non-native substrate proteins and provides a physical environment optimized to promote and accelerate protein folding. This is Chaperonin GroEL from Colwellia psychrerythraea (strain 34H / ATCC BAA-681) (Vibrio psychroerythus).